Consider the following 222-residue polypeptide: Exosome complex component Rrp4 (222 aa).

An S1 motif domain is found at 63-131 (GDLVIGRVTG…EINRVKLTLR (69 aa)).

It belongs to the RRP4 family. In terms of assembly, component of the archaeal exosome complex. Forms a trimer of Rrp4 and/or Csl4 subunits. The trimer associates with a hexameric ring-like arrangement composed of 3 Rrp41-Rrp42 heterodimers.

Its subcellular location is the cytoplasm. In terms of biological role, non-catalytic component of the exosome, which is a complex involved in RNA degradation. Increases the RNA binding and the efficiency of RNA degradation. Confers strong poly(A) specificity to the exosome. The polypeptide is Exosome complex component Rrp4 (Methanosphaera stadtmanae (strain ATCC 43021 / DSM 3091 / JCM 11832 / MCB-3)).